Reading from the N-terminus, the 70-residue chain is uncharacterized protein (70 aa).

Helical transmembrane passes span 13–33 (YYAF…LLGF) and 39–59 (QTYA…GLII).

The protein localises to the cell membrane. This is an uncharacterized protein from Escherichia coli O6:H1 (strain CFT073 / ATCC 700928 / UPEC).